We begin with the raw amino-acid sequence, 185 residues long: CASP-like protein 5A1 (185 aa).

Residues M1–G48 are Cytoplasmic-facing. Residues L49–I69 form a helical membrane-spanning segment. The Extracellular segment spans residues R70–A76. The helical transmembrane segment at F77–I97 threads the bilayer. Topologically, residues D98–D121 are cytoplasmic. The helical transmembrane segment at G122 to I142 threads the bilayer. Residues G143–A160 lie on the Extracellular side of the membrane. A helical transmembrane segment spans residues I161–M181. Over L182 to L185 the chain is Cytoplasmic.

Belongs to the Casparian strip membrane proteins (CASP) family. Homodimer and heterodimers.

It is found in the cell membrane. This chain is CASP-like protein 5A1, found in Pinus contorta (Shore pine).